The chain runs to 178 residues: NADH-quinone oxidoreductase subunit B (178 aa).

Residues cysteine 45, cysteine 46, cysteine 111, and cysteine 140 each contribute to the [4Fe-4S] cluster site.

It belongs to the complex I 20 kDa subunit family. As to quaternary structure, NDH-1 is composed of 15 different subunits. Subunits NuoB, C, D, E, F, and G constitute the peripheral sector of the complex. [4Fe-4S] cluster is required as a cofactor.

The protein resides in the cell membrane. It catalyses the reaction a quinone + NADH + 5 H(+)(in) = a quinol + NAD(+) + 4 H(+)(out). NDH-1 shuttles electrons from NADH, via FMN and iron-sulfur (Fe-S) centers, to quinones in the respiratory chain. The immediate electron acceptor for the enzyme in this species is believed to be a menaquinone. Couples the redox reaction to proton translocation (for every two electrons transferred, four hydrogen ions are translocated across the cytoplasmic membrane), and thus conserves the redox energy in a proton gradient. The chain is NADH-quinone oxidoreductase subunit B from Deinococcus geothermalis (strain DSM 11300 / CIP 105573 / AG-3a).